A 452-amino-acid polypeptide reads, in one-letter code: Protoheme IX farnesyltransferase, mitochondrial (452 aa).

The N-terminal 27 residues, M1–F27, are a transit peptide targeting the mitochondrion. The next 7 helical transmembrane spans lie at V152 to L172, I235 to Y255, I267 to A287, L291 to F311, V341 to V361, W364 to F386, and T417 to K437.

The protein belongs to the UbiA prenyltransferase family.

It is found in the mitochondrion membrane. In terms of biological role, converts protoheme IX and farnesyl diphosphate to heme O. The sequence is that of Protoheme IX farnesyltransferase, mitochondrial (COX10) from Kluyveromyces lactis (strain ATCC 8585 / CBS 2359 / DSM 70799 / NBRC 1267 / NRRL Y-1140 / WM37) (Yeast).